Reading from the N-terminus, the 150-residue chain is Interleukin-17A (150 aa).

Positions 1–17 (MCLMLLLLLNLEATVKA) are cleaved as a signal peptide. Residues 54-75 (SSRRPSDYLNRSTSPWTLSRNE) form a disordered region. A compositionally biased stretch (polar residues) spans 62–72 (LNRSTSPWTLS). Residue Asn63 is glycosylated (N-linked (GlcNAc...) asparagine). Disulfide bonds link Cys89/Cys139 and Cys94/Cys141.

Belongs to the IL-17 family. In terms of assembly, homodimer. Forms complexes with IL17RA and IL17RC receptors with 2:1 binding stoichiometry: two receptor chains for one interleukin molecule. IL17A homodimer preferentially drives the formation of IL17RA-IL17RC heterodimeric receptor complex. IL17A homodimer adopts an asymmetrical ternary structure with one IL17RA molecule, allowing for high affinity interactions of one IL17A monomer with one IL17RA molecule (via D1 and D2 domains), while disfavoring binding of a second IL17RA molecule on the other IL17A monomer. Heterodimer with IL17F. IL17A-IL17F forms complexes with IL17RA-IL17RC, but with lower affinity when compared to IL17A homodimer. IL17RA and IL17RC chains cannot distinguish between IL17A and IL17F molecules, potentially enabling the formation of topologically distinct complexes.

Its subcellular location is the secreted. Effector cytokine of innate and adaptive immune system involved in antimicrobial host defense and maintenance of tissue integrity. Signals via IL17RA-IL17RC heterodimeric receptor complex, triggering homotypic interaction of IL17RA and IL17RC chains with TRAF3IP2 adapter. This leads to downstream TRAF6-mediated activation of NF-kappa-B and MAPkinase pathways ultimately resulting in transcriptional activation of cytokines, chemokines, antimicrobial peptides and matrix metalloproteinases, with potential strong immune inflammation. Plays an important role in connecting T cell-mediated adaptive immunity and acute inflammatory response to destroy extracellular bacteria and fungi. As a signature effector cytokine of T-helper 17 cells (Th17), primarily induces neutrophil activation and recruitment at infection and inflammatory sites. In airway epithelium, mediates neutrophil chemotaxis via induction of CXCL1 and CXCL5 chemokines. In secondary lymphoid organs, contributes to germinal center formation by regulating the chemotactic response of B cells to CXCL12 and CXCL13, enhancing retention of B cells within the germinal centers, B cell somatic hypermutation rate and selection toward plasma cells. Effector cytokine of a subset of gamma-delta T cells that functions as part of an inflammatory circuit downstream IL1B, TLR2 and IL23A-IL12B to promote neutrophil recruitment for efficient bacterial clearance. Effector cytokine of innate immune cells including invariant natural killer cell (iNKT) and group 3 innate lymphoid cells that mediate initial neutrophilic inflammation. Involved in the maintenance of the integrity of epithelial barriers during homeostasis and pathogen infection. Upon acute injury, has a direct role in epithelial barrier formation by regulating OCLN localization and tight junction biogenesis. As part of the mucosal immune response induced by commensal bacteria, enhances host's ability to resist pathogenic bacterial and fungal infections by promoting neutrophil recruitment and antimicrobial peptides release. In synergy with IL17F, mediates the production of antimicrobial beta-defensins DEFB1, DEFB103A, and DEFB104A by mucosal epithelial cells, limiting the entry of microbes through the epithelial barriers. Involved in antiviral host defense through various mechanisms. In Rattus norvegicus (Rat), this protein is Interleukin-17A (Il17a).